The primary structure comprises 337 residues: Ketol-acid reductoisomerase (NADP(+)) (337 aa).

Positions 1-181 (MKIYYEHDAD…GAARAGVIAT (181 aa)) constitute a KARI N-terminal Rossmann domain. Residues 24–27 (FGSQ), arginine 47, serine 50, serine 52, and 82–85 (DEKQ) each bind NADP(+). Residue histidine 107 is part of the active site. NADP(+) is bound at residue glycine 133. The 147-residue stretch at 182–328 (TFKDETETDL…SRLRAMMPFL (147 aa)) folds into the KARI C-terminal knotted domain. 4 residues coordinate Mg(2+): aspartate 190, glutamate 194, glutamate 226, and glutamate 230. Serine 251 provides a ligand contact to substrate.

This sequence belongs to the ketol-acid reductoisomerase family. Requires Mg(2+) as cofactor.

The catalysed reaction is (2R)-2,3-dihydroxy-3-methylbutanoate + NADP(+) = (2S)-2-acetolactate + NADPH + H(+). The enzyme catalyses (2R,3R)-2,3-dihydroxy-3-methylpentanoate + NADP(+) = (S)-2-ethyl-2-hydroxy-3-oxobutanoate + NADPH + H(+). Its pathway is amino-acid biosynthesis; L-isoleucine biosynthesis; L-isoleucine from 2-oxobutanoate: step 2/4. The protein operates within amino-acid biosynthesis; L-valine biosynthesis; L-valine from pyruvate: step 2/4. In terms of biological role, involved in the biosynthesis of branched-chain amino acids (BCAA). Catalyzes an alkyl-migration followed by a ketol-acid reduction of (S)-2-acetolactate (S2AL) to yield (R)-2,3-dihydroxy-isovalerate. In the isomerase reaction, S2AL is rearranged via a Mg-dependent methyl migration to produce 3-hydroxy-3-methyl-2-ketobutyrate (HMKB). In the reductase reaction, this 2-ketoacid undergoes a metal-dependent reduction by NADPH to yield (R)-2,3-dihydroxy-isovalerate. The polypeptide is Ketol-acid reductoisomerase (NADP(+)) (Thermus thermophilus (strain ATCC BAA-163 / DSM 7039 / HB27)).